The chain runs to 249 residues: Hydantoin racemase (249 aa).

This sequence belongs to the HyuE racemase family. As to quaternary structure, homohexamer.

It carries out the reaction a D-5-monosubstituted hydantoin = a L-5-monosubstituted hydantoin. It catalyses the reaction D-5-[2-(methylsulfanyl)ethyl]hydantoin = L-5-[2-(methysulfanyl)ethyl]hydantoin. The enzyme catalyses D-5-benzylhydantoin = L-5-benzylhydantoin. The catalysed reaction is D-5-isopropylhydantoin = L-5-isopropylhydantoin. It carries out the reaction D-5-isobutylhydantoin = L-5-isobutylhydantoin. With respect to regulation, strongly inhibited by Cu(2+) and Zn(2+). Slightly stimulated by the addition of Mn(2+) or Co(2+), but also by metal-chelating agents such as EDTA or EGTA, indicating that the enzyme is not a metalloenzyme. Its function is as follows. Involved in the asymmetric conversion of racemic 5-substituted hydantoins to the corresponding L-amino acids. Catalyzes the racemization via enolization of D- and L-5-monosubstituted hydantoins. Is able to racemize 5-substituted hydantoins having aromatic or aliphatic substituents such as 5-(2-methylthioethyl)hydantoin, 5-isopropylhydantoin, 5-isobutylhydantoin and 5-benzylhydantoin. In Pseudomonas sp. (strain NS671), this protein is Hydantoin racemase.